Here is a 136-residue protein sequence, read N- to C-terminus: Small ribosomal subunit protein uS11c (136 aa).

This sequence belongs to the universal ribosomal protein uS11 family. Part of the 30S ribosomal subunit.

It is found in the plastid. In Epifagus virginiana (Beechdrops), this protein is Small ribosomal subunit protein uS11c.